The chain runs to 1375 residues: DNA-directed RNA polymerase subunit beta' (1375 aa).

Zn(2+)-binding residues include cysteine 70, cysteine 72, cysteine 85, and cysteine 88. Residues aspartate 460, aspartate 462, and aspartate 464 each coordinate Mg(2+). Cysteine 800, cysteine 874, cysteine 881, and cysteine 884 together coordinate Zn(2+).

The protein belongs to the RNA polymerase beta' chain family. The RNAP catalytic core consists of 2 alpha, 1 beta, 1 beta' and 1 omega subunit. When a sigma factor is associated with the core the holoenzyme is formed, which can initiate transcription. The cofactor is Mg(2+). Zn(2+) is required as a cofactor.

It carries out the reaction RNA(n) + a ribonucleoside 5'-triphosphate = RNA(n+1) + diphosphate. Its function is as follows. DNA-dependent RNA polymerase catalyzes the transcription of DNA into RNA using the four ribonucleoside triphosphates as substrates. The protein is DNA-directed RNA polymerase subunit beta' of Bdellovibrio bacteriovorus (strain ATCC 15356 / DSM 50701 / NCIMB 9529 / HD100).